The chain runs to 147 residues: MNCLLLGRGFLHRFHPFRPVLCEDSASAATTITSQFKLNYRQIFIGSSLGLAAGFALGKLGRLFIVACSAVFATIAYINSKGLIRINWPQLQQQVIGPTEQYTGFHFPSSGRFNTQSTFPTIRNWICTNPNFKLSFFSAMYVGFVSS.

The chain crosses the membrane as a helical span at residues 63–79; that stretch reads LFIVACSAVFATIAYIN.

Belongs to the FUN14 family.

It is found in the membrane. This is an uncharacterized protein from Schizosaccharomyces pombe (strain 972 / ATCC 24843) (Fission yeast).